The following is a 289-amino-acid chain: LBH domain-containing protein 1 (289 aa).

Disordered regions lie at residues Met-1–Asp-36 and Glu-205–Asp-289. The LBH domain maps to Met-1–Glu-128. Over residues Thr-15–Pro-25 the composition is skewed to polar residues.

Expressed in bladder cancer tissues (at protein level).

The chain is LBH domain-containing protein 1 from Homo sapiens (Human).